The sequence spans 323 residues: MGEPKDSLALFLCHESESSLNEDDDETIERSDKQEPHFTTTIDDEDYVADLVLKENLRFETLPSKTTSSSDRLIAIDWILTTRTRFGFQHQTAYIAISYFDLFLHKRFIGLQKDETWAMRLLSVACLSLAAKMEERIVPGLSQYPQDHDFVFKPDVIRKTELLILSTLDWKMNLITPFHYFNYFLAKISQDNHSVSKDLVLLRSSDSLLALTKEISFTEYRQFVVAAVTTLLASSSTSSDIRLTREEIANKFGSISWWTSNENENVYLCYQRTLEIEERKHMTPPPEIAVSREPPASGSGAKRRLSFDDSDQSSPPAKRMRRL.

Disordered regions lie at residues 17-36 (ESSL…KQEP) and 281-323 (HMTP…MRRL).

This sequence belongs to the cyclin family. Cyclin D subfamily.

This is Cyclin-D5-1 (CYCD5-1) from Arabidopsis thaliana (Mouse-ear cress).